Here is a 251-residue protein sequence, read N- to C-terminus: Adapter protein MecA (251 aa).

It belongs to the MecA family. Homodimer.

In terms of biological role, enables the recognition and targeting of unfolded and aggregated proteins to the ClpC protease or to other proteins involved in proteolysis. The chain is Adapter protein MecA from Streptococcus agalactiae serotype III (strain NEM316).